The primary structure comprises 111 residues: Large ribosomal subunit protein eL31 (111 aa).

It belongs to the eukaryotic ribosomal protein eL31 family.

The chain is Large ribosomal subunit protein eL31 (RPL31) from Encephalitozoon cuniculi (strain GB-M1) (Microsporidian parasite).